The following is a 387-amino-acid chain: Diphthine methyltransferase (387 aa).

WD repeat units follow at residues 62 to 102 (NTYG…KDDF), 119 to 159 (EKDV…VQFT), 195 to 237 (PHEL…FIWS), 241 to 286 (IHDA…ESIF), and 357 to 387 (GHDS…TWIV).

The protein belongs to the DPH7 family. As to quaternary structure, interacts with CAN1 and RTT10.

The protein resides in the cytoplasm. The protein localises to the endosome. The catalysed reaction is diphthine methyl ester-[translation elongation factor 2] + H2O = diphthine-[translation elongation factor 2] + methanol + H(+). It participates in protein modification; peptidyl-diphthamide biosynthesis. Functionally, catalyzes the demethylation of diphthine methyl ester to form diphthine, an intermediate in diphthamide biosynthesis, a post-translational modification of histidine which occurs in translation elongation factor 2 (EFT1 and EFT2). Also plays a role in the regulation of the retromer complex and is required for the recycling from endosomes of plasma membrane proteins like CAN1 and MUP1. Identified in a screen for mutants with decreased levels of rDNA transcription. The chain is Diphthine methyltransferase (RRT2) from Saccharomyces cerevisiae (strain ATCC 204508 / S288c) (Baker's yeast).